The chain runs to 283 residues: Phenylethanolamine N-methyltransferase (283 aa).

The residue at position 7 (S7) is a Phosphoserine. Residues Y35, Y40, 79 to 80 (GS), Y85, D101, N106, 158 to 159 (DV), and A181 contribute to the S-adenosyl-L-methionine site. E219 and D267 together coordinate octopamine.

The protein belongs to the class I-like SAM-binding methyltransferase superfamily. NNMT/PNMT/TEMT family.

The enzyme catalyses phenylethanolamine + S-adenosyl-L-methionine = N-methylphenylethanolamine + S-adenosyl-L-homocysteine + H(+). The catalysed reaction is (R)-noradrenaline + S-adenosyl-L-methionine = (R)-adrenaline + S-adenosyl-L-homocysteine + H(+). It catalyses the reaction (R)-normetanephrine + S-adenosyl-L-methionine = (R)-metanephrine + S-adenosyl-L-homocysteine + H(+). It carries out the reaction (R)-octopamine + S-adenosyl-L-methionine = (R)-synephrine + S-adenosyl-L-homocysteine + H(+). It functions in the pathway catecholamine biosynthesis; (R)-adrenaline biosynthesis; (R)-adrenaline from (R)-noradrenaline: step 1/1. Catalyzes the transmethylation of nonepinephrine (noradrenaline) to form epinephrine (adrenaline), using S-adenosyl-L-methionine as the methyl donor. Other substrates include phenylethanolamine, octopamine and normetanephrine. The chain is Phenylethanolamine N-methyltransferase (PNMT) from Sus scrofa (Pig).